Here is a 168-residue protein sequence, read N- to C-terminus: Urease accessory protein UreE (168 aa).

The tract at residues 145–168 (EGGAYAAGQGGGHGPHGQHTHPHH) is disordered.

This sequence belongs to the UreE family.

The protein localises to the cytoplasm. Involved in urease metallocenter assembly. Binds nickel. Probably functions as a nickel donor during metallocenter assembly. The protein is Urease accessory protein UreE of Verminephrobacter eiseniae (strain EF01-2).